The primary structure comprises 701 residues: Elongation factor G (701 aa).

In terms of domain architecture, tr-type G spans 8-291 (SRYRNIGIVA…AVIDFLPAPT (284 aa)). GTP is bound by residues 17–24 (AHVDAGKT), 89–93 (DTPGH), and 143–146 (NKMD).

The protein belongs to the TRAFAC class translation factor GTPase superfamily. Classic translation factor GTPase family. EF-G/EF-2 subfamily.

It localises to the cytoplasm. Its function is as follows. Catalyzes the GTP-dependent ribosomal translocation step during translation elongation. During this step, the ribosome changes from the pre-translocational (PRE) to the post-translocational (POST) state as the newly formed A-site-bound peptidyl-tRNA and P-site-bound deacylated tRNA move to the P and E sites, respectively. Catalyzes the coordinated movement of the two tRNA molecules, the mRNA and conformational changes in the ribosome. The sequence is that of Elongation factor G from Pseudomonas fluorescens (strain Pf0-1).